The chain runs to 134 residues: Histone H3.3-like type 1 (134 aa).

The interval 1 to 25 (MARTKHTARKSFGGKAPRKSLATKA) is disordered. Lys-5 and Lys-10 each carry N6-acetyllysine; alternate. N6-methylated lysine; alternate occurs at positions 5 and 10. Ser-11 is modified (phosphoserine). An N6-acetyllysine mark is found at Lys-15 and Lys-24. N6-methylated lysine is present on residues Lys-28 and Lys-37.

The protein belongs to the histone H3 family. As to quaternary structure, the nucleosome is a histone octamer containing two molecules each of H2A, H2B, H3 and H4 assembled in one H3-H4 heterotetramer and two H2A-H2B heterodimers. The octamer wraps approximately 147 bp of DNA. Acetylation is generally linked to gene activation. Post-translationally, methylation at Lys-5 is linked to gene activation. Methylation at Lys-10 is linked to gene repression.

Its subcellular location is the nucleus. The protein resides in the chromosome. Its function is as follows. Putative variant histone H3 which may replace conventional H3 in a subset of nucleosomes. Nucleosomes wrap and compact DNA into chromatin, limiting DNA accessibility to the cellular machineries which require DNA as a template. Histones thereby play a central role in transcription regulation, DNA repair, DNA replication and chromosomal stability. DNA accessibility is regulated via a complex set of post-translational modifications of histones, also called histone code, and nucleosome remodeling. In Caenorhabditis elegans, this protein is Histone H3.3-like type 1 (his-70).